The primary structure comprises 1431 residues: Collagen alpha-1(XVII) chain (1431 aa).

Residues 1 to 468 (MDVTKKNKRD…AWCPCGSCCS (468 aa)) are Cytoplasmic-facing. Residues 1–569 (MDVTKKNKRD…MTEQENGNLR (569 aa)) form a nonhelical region (NC16) region. Disordered regions lie at residues 25-155 (TRLT…PSTR), 167-188 (KGSRSASASPTRNTSSTLPIPK), 304-324 (TAYGVKKNVPQPPTVTSTGVS), and 422-449 (SVENHNYDRGGGSGGGARGGGGSGGGGG). Residues 60–74 (GSSGYINSSGSIRGN) show a composition bias toward low complexity. Composition is skewed to polar residues over residues 75–96 (ASTSSYRRAHSPASTLPNSPGS), 111–120 (EGSSSGNSSP), and 170–184 (RSASASPTRNTSSTL). The segment at 146–231 (RLQSASPSTR…WSSTLPAGSS (86 aa)) is necessary for interaction with DST and for the recruitment of DST to hemidesmosome. The span at 430-449 (RGGGSGGGARGGGGSGGGGG) shows a compositional bias: gly residues. A helical; Signal-anchor for type II membrane protein membrane pass occupies residues 469–489 (WWKWLLGLLLTWLLLLGLLFG). Residues 490 to 1431 (LIALAEEVRK…RRRRSIAIKP (942 aa)) are Extracellular-facing. S547 is modified (phosphoserine; by CK2). 4 disordered regions span residues 564–869 (ENGN…SFIS), 884–996 (DLRG…SSSG), 1158–1178 (DIIGPPGPPGPPGPRGPPGVS), and 1208–1249 (FIIG…SSSV). The interval 570 to 1417 (GNPGPKGDMG…KGDKGDKGDQ (848 aa)) is triple-helical region. Low complexity-rich tracts occupy residues 657 to 673 (PRGLPGVPGSVGPRGPN), 738 to 751 (EPGAKGAMGPAGPD), and 778 to 799 (PGKPGVTGPQGPQGLPGSPGRP). 6 stretches are compositionally biased toward pro residues: residues 823-844 (PGPPGPPGAMGPPGPSGTPGPA), 889-911 (LGPPGPRGPPGPSIPGPPGPRGP), 937-946 (PPGPPGPPGP), 979-989 (PPGPPGPPGPP), 1162-1174 (PPGPPGPPGPRGP), and 1212-1221 (PPGPPGPQGP). A glycan (N-linked (GlcNAc...) asparagine) is linked at N1230. The segment covering 1232 to 1249 (SWGSSSSARRGTAYSSSV) has biased composition (polar residues). Residue N1356 is glycosylated (N-linked (GlcNAc...) asparagine). The disordered stretch occupies residues 1366–1431 (RTHGAIPGPP…RRRRSIAIKP (66 aa)). Residues 1407–1416 (QKGDKGDKGD) are compositionally biased toward basic and acidic residues. The tract at residues 1418-1431 (VYTGRRRRSIAIKP) is nonhelical region (NC1). Basic residues predominate over residues 1421-1431 (GRRRRSIAIKP).

In terms of assembly, homotrimers of alpha 1(XVII)chains. Interacts (via cytoplasmic region) with ITGB4 (via cytoplasmic region). Interacts (via cytoplasmic region) with DST (via N-terminus). Interacts (via N-terminus) with PLEC. Interacts (via cytoplasmic region) with DSP. In terms of processing, the intracellular/endo domain is disulfide-linked. Prolines at the third position of the tripeptide repeating unit (G-X-Y) are hydroxylated in some or all of the chains. Post-translationally, the ectodomain is shedded from the surface of keratinocytes resulting in a 120-kDa soluble form, also named as 120 kDa linear IgA disease antigen homolog. The shedding is mediated by membrane-bound metalloproteases. This cleavage is inhibited by phosphorylation at Ser-547.

It is found in the cell junction. The protein resides in the hemidesmosome. It localises to the membrane. The protein localises to the secreted. Its subcellular location is the extracellular space. It is found in the extracellular matrix. The protein resides in the basement membrane. Functionally, may play a role in the integrity of hemidesmosome and the attachment of basal keratinocytes to the underlying basement membrane. The 120 kDa linear IgA disease antigen homolog is an anchoring filament component involved in dermal-epidermal cohesion. The protein is Collagen alpha-1(XVII) chain (COL17A1) of Mesocricetus auratus (Golden hamster).